A 129-amino-acid chain; its full sequence is MKTAQFYIFFFCWKAIWCNGCVLTNITISVEREECEFCISINTTWCSGYCHTRDLVYKEPIRPNIQKACTFREFVYETMSLPGCANQADSLYSYPVATACHCGSCDTDSTDCTVRGLGPSYCSFNERKE.

Positions 1 to 20 (MKTAQFYIFFFCWKAIWCNG) are cleaved as a signal peptide. Disulfide bonds link Cys-21-Cys-69, Cys-35-Cys-84, Cys-38-Cys-122, Cys-46-Cys-100, Cys-50-Cys-102, and Cys-105-Cys-112. N-linked (GlcNAc...) asparagine glycans are attached at residues Asn-25 and Asn-42.

The protein belongs to the glycoprotein hormones subunit beta family. In terms of assembly, heterodimer. The active follitropin is a heterodimer composed of an alpha chain/CGA shared with other hormones and a unique beta chain/FSHB shown here.

The protein localises to the secreted. Together with the alpha chain CGA constitutes follitropin, the follicle-stimulating hormone, and provides its biological specificity to the hormone heterodimer. Binds FSHR, a G protein-coupled receptor, on target cells to activate downstream signaling pathways. Follitropin is involved in follicle development and spermatogenesis in reproductive organs. This chain is Follitropin subunit beta (FSHB), found in Monodelphis domestica (Gray short-tailed opossum).